The following is a 227-amino-acid chain: 2,3-bisphosphoglycerate-dependent phosphoglycerate mutase (227 aa).

Substrate-binding positions include 7–14 (RHGFSEWN), 20–21 (TG), R59, 86–89 (ERHY), K97, 113–114 (RR), and 182–183 (GN). Residue H8 is the Tele-phosphohistidine intermediate of the active site. E86 serves as the catalytic Proton donor/acceptor.

It belongs to the phosphoglycerate mutase family. BPG-dependent PGAM subfamily. Homodimer.

The enzyme catalyses (2R)-2-phosphoglycerate = (2R)-3-phosphoglycerate. It functions in the pathway carbohydrate degradation; glycolysis; pyruvate from D-glyceraldehyde 3-phosphate: step 3/5. Its function is as follows. Catalyzes the interconversion of 2-phosphoglycerate and 3-phosphoglycerate. In Actinobacillus pleuropneumoniae serotype 5b (strain L20), this protein is 2,3-bisphosphoglycerate-dependent phosphoglycerate mutase.